A 213-amino-acid polypeptide reads, in one-letter code: Isomeliandiol synthase MOI2 (213 aa).

The next 5 membrane-spanning stretches (helical) occupy residues 18-38 (AALH…SWFI), 52-72 (VLCW…YYVF), 109-129 (IESM…YALA), 137-157 (ILQF…FLSA), and 171-191 (YWAY…LIAI). The EXPERA domain occupies 48–190 (MDRVVLCWWA…IWVIVPALIA (143 aa)).

This sequence belongs to the EBP family. Mainly expressed in petioles.

Its subcellular location is the membrane. It catalyses the reaction 7,8-epoxymelianol = isomeliandiol. The protein operates within secondary metabolite biosynthesis; terpenoid biosynthesis. Isomerase involved in the biosynthesis of limonoids triterpene natural products such as azadirachtin, an antifeedant widely used as bioinsecticide, and possessing many medicinal applications including anti-tumoral, anti-malarial, anti-rheumatic, antibacterial, anti-inflammatory, anti-pyretic and diuretic effects. Catalyzes the conversion of 7,8-epoxymelianol to isomeliandiol via skeletal rearrangements. This chain is Isomeliandiol synthase MOI2, found in Melia azedarach (Chinaberry tree).